The following is a 152-amino-acid chain: Large ribosomal subunit protein bL9 (152 aa).

The protein belongs to the bacterial ribosomal protein bL9 family.

Its function is as follows. Binds to the 23S rRNA. The sequence is that of Large ribosomal subunit protein bL9 from Coxiella burnetii (strain RSA 331 / Henzerling II).